A 208-amino-acid chain; its full sequence is FAS-associated death domain protein (208 aa).

The region spanning 3–81 (PFLVLLHSVS…RHDLLRRVDD (79 aa)) is the DED domain. One can recognise a Death domain in the interval 97 to 181 (LCAAFNVICD…LVADLVQEVQ (85 aa)). A (Microbial infection) N-beta-linked (GlcNAc) arginine glycan is attached at arginine 117. The interval 187 to 208 (QNRSGAMSPMSWNSDASTSEAS) is disordered. Serine 194 carries the phosphoserine modification.

Can self-associate. Component of the AIM2 PANoptosome complex, a multiprotein complex that drives inflammatory cell death (PANoptosis). Component of the death-induced signaling complex (DISC) composed of cell surface receptor FAS/CD95 or TNFRSF1A, adapter protein FADD and the CASP8 protease; recruitment of CASP8 to the complex is required for processing of CASP8 into the p18 and p10 subunits. Interacts (via death domain) with FAS (via death domain). Interacts directly (via DED domain) with NOL3 (via CARD domain); inhibits death-inducing signaling complex (DISC) assembly by inhibiting the increase in FAS-FADD binding induced by FAS activation. Interacts with CFLAR, PEA15 and MBD4. When phosphorylated, part of a complex containing HIPK3 and FAS. May interact with MAVS/IPS1. Interacts with MOCV v-CFLAR protein and PIDD1. Interacts with RIPK1 and TRADD. Interacts with stimulated TNFRSF10B. Interacts with DDX24. As to quaternary structure, (Microbial infection) Interacts with human papillomavirus 16/HPV16 protein E6. In terms of assembly, (Microbial infection) Interacts with molluscum contagiosum virus proteins MC159L/v-CFLAR and MC160L. In terms of processing, (Microbial infection) Glycosylated at Arg-117 by enteropathogenic E.coli protein NleB1, C.rodentium protein NleB and S.typhimurium protein Ssek1: arginine GlcNAcylation prevents recruitment of caspase-8 or caspase-10 to the activated Fas (CD95) or TNFR-1 receptors. In terms of tissue distribution, expressed in a wide variety of tissues, except for peripheral blood mononuclear leukocytes.

It is found in the cytoplasm. Apoptotic adapter molecule that recruits caspases CASP8 or CASP10 to the activated FAS/CD95 or TNFRSF1A/TNFR-1 receptors. The resulting aggregate called the death-inducing signaling complex (DISC) performs CASP8 proteolytic activation. Active CASP8 initiates the subsequent cascade of caspases mediating apoptosis. Involved in interferon-mediated antiviral immune response, playing a role in the positive regulation of interferon signaling. The chain is FAS-associated death domain protein from Homo sapiens (Human).